Reading from the N-terminus, the 331-residue chain is Cytoskeleton protein RodZ (331 aa).

The Cytoplasmic segment spans residues 1-111 (MNTEATQDHQ…LGKRRKKRDG (111 aa)). Positions 19 to 71 (LRHAREQLGLSQQAVAERLCLKVSTVRDIEDDKAPADLASTFLRGYIRSYARL) constitute an HTH cro/C1-type domain. The segment at residues 30–49 (QQAVAERLCLKVSTVRDIED) is a DNA-binding region (H-T-H motif). The helical; Signal-anchor for type II membrane protein transmembrane segment at 112–132 (WLMSFTWLVLFVVIGLSGAWW) threads the bilayer. Residues 133–331 (WQDHKAQQEE…TLNAESSPAQ (199 aa)) lie on the Periplasmic side of the membrane. Positions 146–166 (MADQSSAELNGGDANSQNVPL) are enriched in polar residues. A disordered region spans residues 146–238 (MADQSSAELN…ASPLPTDQAN (93 aa)). 2 stretches are compositionally biased toward low complexity: residues 167–202 (DTSA…TPAD) and 216–234 (TAGT…PLPT).

Belongs to the RodZ family.

It is found in the cell inner membrane. Its function is as follows. Cytoskeletal protein that is involved in cell-shape control through regulation of the length of the long axis. The sequence is that of Cytoskeleton protein RodZ from Klebsiella pneumoniae subsp. pneumoniae (strain ATCC 700721 / MGH 78578).